The sequence spans 82 residues: Exodeoxyribonuclease 7 small subunit (82 aa).

The protein belongs to the XseB family. As to quaternary structure, heterooligomer composed of large and small subunits.

The protein resides in the cytoplasm. The enzyme catalyses Exonucleolytic cleavage in either 5'- to 3'- or 3'- to 5'-direction to yield nucleoside 5'-phosphates.. Functionally, bidirectionally degrades single-stranded DNA into large acid-insoluble oligonucleotides, which are then degraded further into small acid-soluble oligonucleotides. This Pectobacterium carotovorum subsp. carotovorum (strain PC1) protein is Exodeoxyribonuclease 7 small subunit.